A 202-amino-acid chain; its full sequence is Syndecan-2 (202 aa).

The N-terminal stretch at 1–18 (MQRAWILLTLGLMACVSA) is a signal peptide. The Extracellular portion of the chain corresponds to 19 to 145 (ETRTELTSDK…HSDNLFKRTE (127 aa)). Serine 41, serine 55, and serine 57 each carry an O-linked (Xyl...) (glycosaminoglycan) serine glycan. Disordered stretches follow at residues 41-63 (SGVY…DEDI) and 88-118 (ETMT…ISEA). Residues 91 to 103 (TLKTQSITPAQTE) show a composition bias toward polar residues. Residues 104–117 (SPEETDKEEVDISE) show a composition bias toward acidic residues. Serine 116 is subject to Phosphoserine. The helical transmembrane segment at 146–170 (VLAAVIAGGVIGFLFAIFLILLLVY) threads the bilayer. Residues 171 to 202 (RMRKKDEGSYDLGERKPSSAAYQKAPTKEFYA) lie on the Cytoplasmic side of the membrane. Positions 179–202 (SYDLGERKPSSAAYQKAPTKEFYA) are disordered. The residue at position 188 (serine 188) is a Phosphoserine.

This sequence belongs to the syndecan proteoglycan family. Interacts (via cytoplasmic domain) with SARM1. Forms a complex with SDCBP and PDCD6IP. In terms of processing, O-glycosylated; contains both heparan sulfate and chondroitin sulfate. Post-translationally, phosphorylated on serine residues. In terms of tissue distribution, preferential expression in cells of mesenchymal origin.

It is found in the membrane. In terms of biological role, cell surface proteoglycan which regulates dendritic arbor morphogenesis. The protein is Syndecan-2 (Sdc2) of Mus musculus (Mouse).